Here is a 353-residue protein sequence, read N- to C-terminus: MAGNTIGKVFRVTTFGESHGTALGCVIDGMPPGLELSSDDLQYDLNRRRPGTSRYTTQRSELDEVQILSGVFKGTTTGTSIGLVIQNKDQRSQDYSEIKDLFRPGHADYTYEKKYGIRDYRGGGRSSARETAMRVAAGSIAKKYLKIQTGIVIRAYLSAMGDIKCPFESWEEVEQNPFFCSNKNKVFQLEELIKKLKKTGDSIGAEITIIAQNVPVGFGEPVFDRLDADLAHALMSINAAKGVEIGDGFSVVNQKGSENRDEMTPNGFKSNHCGGILGGISNGENIFLKVAFKPTSSIRQSGNTINKNNEKVKIVIKGRHDPCVGIRAVPIAEAMVAIVLMDHLLRFRAQCAK.

Residues Arg-48 and Arg-54 each coordinate NADP(+). Residues 125–127, 238–239, Gly-278, 293–297, and Arg-319 contribute to the FMN site; these read RSS, NA, and KPTSS.

Belongs to the chorismate synthase family. Homotetramer. Requires FMNH2 as cofactor.

It catalyses the reaction 5-O-(1-carboxyvinyl)-3-phosphoshikimate = chorismate + phosphate. The protein operates within metabolic intermediate biosynthesis; chorismate biosynthesis; chorismate from D-erythrose 4-phosphate and phosphoenolpyruvate: step 7/7. In terms of biological role, catalyzes the anti-1,4-elimination of the C-3 phosphate and the C-6 proR hydrogen from 5-enolpyruvylshikimate-3-phosphate (EPSP) to yield chorismate, which is the branch point compound that serves as the starting substrate for the three terminal pathways of aromatic amino acid biosynthesis. This reaction introduces a second double bond into the aromatic ring system. The protein is Chorismate synthase of Buchnera aphidicola subsp. Schizaphis graminum (strain Sg).